We begin with the raw amino-acid sequence, 340 residues long: Anthranilate phosphoribosyltransferase (340 aa).

5-phospho-alpha-D-ribose 1-diphosphate contacts are provided by residues glycine 81, 84–85 (GD), threonine 89, 91–94 (NIST), 109–117 (KHGNRNLSS), and alanine 121. Glycine 81 is a binding site for anthranilate. Serine 93 contributes to the Mg(2+) binding site. An anthranilate-binding site is contributed by asparagine 112. Residue arginine 167 participates in anthranilate binding. Mg(2+) contacts are provided by aspartate 226 and glutamate 227.

It belongs to the anthranilate phosphoribosyltransferase family. Homodimer. It depends on Mg(2+) as a cofactor.

The catalysed reaction is N-(5-phospho-beta-D-ribosyl)anthranilate + diphosphate = 5-phospho-alpha-D-ribose 1-diphosphate + anthranilate. It participates in amino-acid biosynthesis; L-tryptophan biosynthesis; L-tryptophan from chorismate: step 2/5. In terms of biological role, catalyzes the transfer of the phosphoribosyl group of 5-phosphorylribose-1-pyrophosphate (PRPP) to anthranilate to yield N-(5'-phosphoribosyl)-anthranilate (PRA). This chain is Anthranilate phosphoribosyltransferase, found in Ruegeria sp. (strain TM1040) (Silicibacter sp.).